A 519-amino-acid chain; its full sequence is Voltage-gated potassium channel regulatory subunit KCNG4 (519 aa).

A disordered region spans residues 1–25 (MPMPSRDGGLHPRHHHYGSHSPWSQ). The Cytoplasmic segment spans residues 1-218 (MPMPSRDGGL…EMVENPQSGL (218 aa)). A helical membrane pass occupies residues 219–240 (PGKVFACLSILFVATTAVSLCV). The Extracellular segment spans residues 241-261 (STMPDLRAEEDQGECSRKCYY). The helical transmembrane segment at 262 to 283 (IFIVETICVAWFSLEFCLRFVQ) threads the bilayer. Topologically, residues 284–294 (AQDKCQFFQGP) are cytoplasmic. Residues 295–314 (LNIIDILAISPYYVSLAVSE) form a helical membrane-spanning segment. The Extracellular portion of the chain corresponds to 315-328 (EPPEDGERPSGSSY). The helical; Voltage-sensor transmembrane segment at 329–353 (LEKVGLVLRVLRALRILYVMRLARH) threads the bilayer. At 354-368 (SLGLQTLGLTVRRCT) the chain is on the cytoplasmic side. A helical transmembrane segment spans residues 369–390 (REFGLLLLFLAVAITLFSPLVY). Over 391–405 (VAEKESGRVLEFTSI) the chain is Extracellular. Residues 406–417 (PASYWWAIISMT) constitute an intramembrane region (helical). The Selectivity filter signature appears at 418–423 (TVGYGD). An intramembrane segment occupies 418–425 (TVGYGDMV). Residues 426–432 (PRSVPGQ) lie on the Extracellular side of the membrane. A helical transmembrane segment spans residues 433–461 (MVALSSILSGILIMAFPATSIFHTFSHSY). The Cytoplasmic segment spans residues 462-519 (LELKKEQEQLQARLRHLQNTGPASECELLDPHVASEHELMNDVNDLILEGPALPIMHM).

It belongs to the potassium channel family. G (TC 1.A.1.2) subfamily. Kv6.4/KCNG4 sub-subfamily. In terms of assembly, heterotetramer with KCNB1. Does not form homomultimer. Highly expressed in brain, and at lower levels in liver, small intestine and colon.

It localises to the cell membrane. In terms of biological role, regulatory subunit of the voltage-gated potassium (Kv) channel which, when coassembled with KCNB1, modulates the kinetics parameters of the heterotetrameric channel namely the time course of activation, deactivation and inactivation and on the voltage-dependence of activation. Potassium channel subunit that does not form functional channels by itself. Reduces the deactivation rate. Modulates the threshold for activation by shifting by approximately 20 mV in hyperpolarizing direction. Markedly changes the inactivation by shifting the voltage dependence of inactivation by approximately 40 mV in hyperpolarizing direction. Acceleratee activation and enhances the time course of activation. The polypeptide is Voltage-gated potassium channel regulatory subunit KCNG4 (Homo sapiens (Human)).